We begin with the raw amino-acid sequence, 644 residues long: MAKIIGIDLGTTNSCVAVMEGDKPKVIENSEGHRTTPSIVAFTDDNEILVGQSAKRQSVTNPEKTLFAIKRLIGRRFDDPIVQKDIKMVPYKIMKADNGDAWVRVKDQDKAPPQISAEVLRKMKKTAEDYLGEEVKEAVITVPAYFNDSQRQATKDAGRIAGLEVKRIINEPTAAALAYGMDKKRGDSVIAVYDLGGGTFDISIIEIAEVDGEHQFEVLATNGDTFLGGEDFDLALIEYLASEFKKDTGIDLHNDPLALQRLKEAAEKAKIELSSAQQTDVNLPYITADASGPKHLNIKLTRAKLESLVEKLVERTIEPCKTALKDAGLTVSQINEVILVGGQTRMPLVQKTVEEFFGKEPRKDVNPDEAVAVGAAIQAAVLSGEVKDILLLDVTPLSLGIETMGGVMTKLIEKNTTIPTKATQVFSTADDNQTAVTVHVLQGEREQASANKSLGRFDLRDIPPAPRGVPQIEVTFDIDANGILNVSAKDKATGKAQSIVIKASSGLSEEEVAAMVKDAQSHAEEDKKFKEMAELRNQADSLIHSCEKSMKDLADELSEDEKKGIETAISELKEAVQGTDKTRIEDKLKVLTDASAKMAERIYAKKSSEGQAAQGQTQSQESTKPVEEGVVDAEFEEVKEEDKK.

Residue Thr-199 is modified to Phosphothreonine; by autocatalysis. Residues 605 to 644 (KKSSEGQAAQGQTQSQESTKPVEEGVVDAEFEEVKEEDKK) form a disordered region. Positions 609 to 623 (EGQAAQGQTQSQEST) are enriched in polar residues. Over residues 629-644 (GVVDAEFEEVKEEDKK) the composition is skewed to acidic residues.

It belongs to the heat shock protein 70 family.

Acts as a chaperone. In Legionella pneumophila (strain Paris), this protein is Chaperone protein DnaK.